Reading from the N-terminus, the 745-residue chain is uncharacterized protein (745 aa).

Residues Asn-158–Asp-256 enclose the HTH araC/xylS-type domain. DNA-binding regions (H-T-H motif) lie at residues Ser-175–Leu-196 and Ile-223–Thr-246.

This is an uncharacterized protein from Staphylococcus aureus.